A 689-amino-acid polypeptide reads, in one-letter code: DNA ligase (689 aa).

Residues 40–44, 89–90, and glutamate 121 each bind NAD(+); these read DAEYD and SL. Lysine 123 functions as the N6-AMP-lysine intermediate in the catalytic mechanism. NAD(+) is bound by residues arginine 144, glutamate 179, lysine 295, and lysine 319. 4 residues coordinate Zn(2+): cysteine 413, cysteine 416, cysteine 431, and cysteine 437. Positions 610–689 constitute a BRCT domain; that stretch reads REQSSLTGKI…AEWLTLVRDI (80 aa).

This sequence belongs to the NAD-dependent DNA ligase family. LigA subfamily. It depends on Mg(2+) as a cofactor. Mn(2+) is required as a cofactor.

The enzyme catalyses NAD(+) + (deoxyribonucleotide)n-3'-hydroxyl + 5'-phospho-(deoxyribonucleotide)m = (deoxyribonucleotide)n+m + AMP + beta-nicotinamide D-nucleotide.. In terms of biological role, DNA ligase that catalyzes the formation of phosphodiester linkages between 5'-phosphoryl and 3'-hydroxyl groups in double-stranded DNA using NAD as a coenzyme and as the energy source for the reaction. It is essential for DNA replication and repair of damaged DNA. In Rickettsia bellii (strain RML369-C), this protein is DNA ligase.